Reading from the N-terminus, the 192-residue chain is Crossover junction endodeoxyribonuclease RuvC (192 aa).

Residues aspartate 7, glutamate 67, and aspartate 140 contribute to the active site. Mg(2+) is bound by residues aspartate 7, glutamate 67, and aspartate 140. Residues 158–192 form a disordered region; it reads RQSGVPPRTNSRRKSGTGGSWEQFVRQSPNVVVRS. The segment covering 182–192 has biased composition (polar residues); that stretch reads VRQSPNVVVRS.

Belongs to the RuvC family. Homodimer which binds Holliday junction (HJ) DNA. The HJ becomes 2-fold symmetrical on binding to RuvC with unstacked arms; it has a different conformation from HJ DNA in complex with RuvA. In the full resolvosome a probable DNA-RuvA(4)-RuvB(12)-RuvC(2) complex forms which resolves the HJ. It depends on Mg(2+) as a cofactor.

It localises to the cytoplasm. The enzyme catalyses Endonucleolytic cleavage at a junction such as a reciprocal single-stranded crossover between two homologous DNA duplexes (Holliday junction).. The RuvA-RuvB-RuvC complex processes Holliday junction (HJ) DNA during genetic recombination and DNA repair. Endonuclease that resolves HJ intermediates. Cleaves cruciform DNA by making single-stranded nicks across the HJ at symmetrical positions within the homologous arms, yielding a 5'-phosphate and a 3'-hydroxyl group; requires a central core of homology in the junction. The consensus cleavage sequence is 5'-(A/T)TT(C/G)-3'. Cleavage occurs on the 3'-side of the TT dinucleotide at the point of strand exchange. HJ branch migration catalyzed by RuvA-RuvB allows RuvC to scan DNA until it finds its consensus sequence, where it cleaves and resolves the cruciform DNA. The polypeptide is Crossover junction endodeoxyribonuclease RuvC (Chlorobium chlorochromatii (strain CaD3)).